Here is a 409-residue protein sequence, read N- to C-terminus: SPI-1 type 3 secretion system translocon protein SctB (409 aa).

A helical transmembrane segment spans residues 119–140; the sequence is ISGMSSSAVALLAAANTLMLTL. The segment covering 350–368 has biased composition (polar residues); sequence ERSEQQISQVNNRVASTAS. The segment at 350 to 378 is disordered; that stretch reads ERSEQQISQVNNRVASTASDEARESSRKS.

It belongs to the SctB/SipC family. In terms of assembly, the core secretion machinery of the T3SS is composed of approximately 20 different proteins, including cytoplasmic components, a base, an export apparatus and a needle. This subunit is involved in the formation of a pore, called the translocon, in host membrane.

It is found in the secreted. The protein resides in the host membrane. Functionally, component of the type III secretion system 1 (SPI-1 T3SS), also called injectisome, which is used to inject bacterial effector proteins into eukaryotic host cells. SipB/SctE1 and SipC/SctB1 are inserted into the host membrane where they form a pore and allow the translocation of effector proteins into the cytosol of target cells. The polypeptide is SPI-1 type 3 secretion system translocon protein SctB (Salmonella typhi).